Reading from the N-terminus, the 169-residue chain is ATP synthase subunit b (169 aa).

The chain crosses the membrane as a helical span at residues 12 to 32 (PSVGLIFWKTVAFLIFLYILY). Positions 69–107 (AENEEARREAEQKAQQILREARDSAEELREEEKAKTRRE) are disordered. The span at 87 to 107 (REARDSAEELREEEKAKTRRE) shows a compositional bias: basic and acidic residues.

It belongs to the ATPase B chain family. As to quaternary structure, F-type ATPases have 2 components, F(1) - the catalytic core - and F(0) - the membrane proton channel. F(1) has five subunits: alpha(3), beta(3), gamma(1), delta(1), epsilon(1). F(0) has three main subunits: a(1), b(2) and c(10-14). The alpha and beta chains form an alternating ring which encloses part of the gamma chain. F(1) is attached to F(0) by a central stalk formed by the gamma and epsilon chains, while a peripheral stalk is formed by the delta and b chains.

It is found in the cell inner membrane. Its function is as follows. F(1)F(0) ATP synthase produces ATP from ADP in the presence of a proton or sodium gradient. F-type ATPases consist of two structural domains, F(1) containing the extramembraneous catalytic core and F(0) containing the membrane proton channel, linked together by a central stalk and a peripheral stalk. During catalysis, ATP synthesis in the catalytic domain of F(1) is coupled via a rotary mechanism of the central stalk subunits to proton translocation. Component of the F(0) channel, it forms part of the peripheral stalk, linking F(1) to F(0). This Salinibacter ruber (strain DSM 13855 / M31) protein is ATP synthase subunit b.